The sequence spans 107 residues: Protein Rev (107 aa).

Ser5 and Ser8 each carry phosphoserine; by host CK2. The segment at 18-26 is homomultimerization; that stretch reads IIKILYQSN. Disordered regions lie at residues 26-50 and 82-107; these read NPYP…ARQR and NINC…VGNP. The Nuclear localization signal and RNA-binding (RRE) signature appears at 34–50; sequence TRQARRNRRRRWRARQR. A compositionally biased stretch (basic residues) spans 36-50; it reads QARRNRRRRWRARQR. Positions 73–84 match the Nuclear export signal and binding to XPO1 motif; it reads FQLPPIERLNIN. Residues 86 to 101 are compositionally biased toward low complexity; the sequence is SESGGTSGTQQPQGNT. Position 92 is a phosphoserine; by host (Ser92).

The protein belongs to the HIV-1 REV protein family. Homomultimer; when bound to the RRE. Multimeric assembly is essential for activity and may involve XPO1. Binds to human KPNB1, XPO1, TNPO1, RANBP5 and IPO7. Interacts with the viral Integrase. Interacts with human KHDRBS1. Interacts with human NAP1; this interaction decreases Rev multimerization and stimulates its activity. Interacts with human DEAD-box helicases DDX3 and DDX24; these interactions may serve for viral RNA export to the cytoplasm and packaging, respectively. Interacts with human PSIP1; this interaction may inhibit HIV-1 DNA integration by promoting dissociation of the Integrase-LEDGF/p75 complex. In terms of processing, asymmetrically arginine dimethylated at one site by host PRMT6. Methylation impairs the RNA-binding activity and export of viral RNA from the nucleus to the cytoplasm. Post-translationally, phosphorylated by protein kinase CK2. Presence of, and maybe binding to the N-terminus of the regulatory beta subunit of CK2 is necessary for CK2-mediated Rev's phosphorylation.

The protein resides in the host nucleus. Its subcellular location is the host nucleolus. It is found in the host cytoplasm. Escorts unspliced or incompletely spliced viral pre-mRNAs (late transcripts) out of the nucleus of infected cells. These pre-mRNAs carry a recognition sequence called Rev responsive element (RRE) located in the env gene, that is not present in fully spliced viral mRNAs (early transcripts). This function is essential since most viral proteins are translated from unspliced or partially spliced pre-mRNAs which cannot exit the nucleus by the pathway used by fully processed cellular mRNAs. Rev itself is translated from a fully spliced mRNA that readily exits the nucleus. Rev's nuclear localization signal (NLS) binds directly to KPNB1/Importin beta-1 without previous binding to KPNA1/Importin alpha-1. KPNB1 binds to the GDP bound form of RAN (Ran-GDP) and targets Rev to the nucleus. In the nucleus, the conversion from Ran-GDP to Ran-GTP dissociates Rev from KPNB1 and allows Rev's binding to the RRE in viral pre-mRNAs. Rev multimerization on the RRE via cooperative assembly exposes its nuclear export signal (NES) to the surface. Rev can then form a complex with XPO1/CRM1 and Ran-GTP, leading to nuclear export of the complex. Conversion from Ran-GTP to Ran-GDP mediates dissociation of the Rev/RRE/XPO1/RAN complex, so that Rev can return to the nucleus for a subsequent round of export. Beside KPNB1, also seems to interact with TNPO1/Transportin-1, RANBP5/IPO5 and IPO7/RANBP7 for nuclear import. The nucleoporin-like HRB/RIP is an essential cofactor that probably indirectly interacts with Rev to release HIV RNAs from the perinuclear region to the cytoplasm. This is Protein Rev from Human immunodeficiency virus type 1 group M subtype C (isolate 92BR025) (HIV-1).